The following is a 339-amino-acid chain: UDP-glucose 4-epimerase (339 aa).

NAD(+)-binding positions include phenylalanine 12–isoleucine 13, aspartate 32–serine 37, aspartate 59–isoleucine 60, phenylalanine 81–lysine 85, asparagine 100, serine 125, tyrosine 150, lysine 154, and phenylalanine 179. Serine 125 and tyrosine 150 together coordinate substrate. Tyrosine 150 acts as the Proton acceptor in catalysis. Residues asparagine 180, asparagine 200–leucine 201, serine 217–phenylalanine 219, arginine 232, and arginine 293–aspartate 296 each bind substrate.

The protein belongs to the NAD(P)-dependent epimerase/dehydratase family. As to quaternary structure, homodimer. It depends on NAD(+) as a cofactor.

It catalyses the reaction UDP-alpha-D-glucose = UDP-alpha-D-galactose. Its pathway is carbohydrate metabolism; galactose metabolism. Its function is as follows. Involved in the metabolism of galactose. Plays an essential role in the incorporation of galactose into meningococcal lipopolysaccharide surface molecules, which are important for pathogenesis. Catalyzes the conversion of UDP-galactose (UDP-Gal) to UDP-glucose (UDP-Glc) through a mechanism involving the transient reduction of NAD. This Neisseria meningitidis serogroup A / serotype 4A (strain DSM 15465 / Z2491) protein is UDP-glucose 4-epimerase (galE).